A 207-amino-acid chain; its full sequence is Uracil phosphoribosyltransferase (207 aa).

Residues arginine 77, arginine 102, and 129–137 (DPMLATGGS) contribute to the 5-phospho-alpha-D-ribose 1-diphosphate site. Residues isoleucine 192 and 197-199 (GDA) each bind uracil. Aspartate 198 contributes to the 5-phospho-alpha-D-ribose 1-diphosphate binding site.

Belongs to the UPRTase family. Mg(2+) serves as cofactor.

It carries out the reaction UMP + diphosphate = 5-phospho-alpha-D-ribose 1-diphosphate + uracil. It participates in pyrimidine metabolism; UMP biosynthesis via salvage pathway; UMP from uracil: step 1/1. With respect to regulation, allosterically activated by GTP. Its function is as follows. Catalyzes the conversion of uracil and 5-phospho-alpha-D-ribose 1-diphosphate (PRPP) to UMP and diphosphate. The protein is Uracil phosphoribosyltransferase of Nocardia farcinica (strain IFM 10152).